Reading from the N-terminus, the 492-residue chain is MSDDLFSKALENPDQDLNVELPKDDVDLGLLGDGGNERKTDEPVADAERSTGLGSGSSESESDSGSDSDSDSGSSGSEDDSADQDVEGEDEGGDAIENEDEDEDPSPSGPILSKNEILEETVPELPEDYEISEKTIITPIGVLKSAFENNIIIHATMSGEKRVLKEGSIFCLEDRTLIGMLTEVFGPLQNPFYRIKLPDSKKNLFDELKVRLGEKAFIVTPDAHWIDTFELKRNKGTDASNGYDEELPEEEQEFSDDEKEALFKKMKKQQRQRKKRDNRKLANDSDNVKVKRARQPKANSLPKLVPPLGMSSNAPMQHGYKSRNARENIKRESSATSNRNGSSPVPITQHHQQQFSANNYPFPQQPNGMPYPPYSPFPQPTNFQYPPPPFGQATPAQFSNTVPYGSLPPAYNNMSPPTQQSFMPMTQSQPPLPYGVPPMNQMQNPMYIQPPPQAPPQGNGNFQQVMELHQILLQQQQQQHQYQHQHQQDPRT.

A disordered region spans residues 1-117 (MSDDLFSKAL…SGPILSKNEI (117 aa)). Basic and acidic residues predominate over residues 35 to 49 (GNERKTDEPVADAER). Acidic residues-rich tracts occupy residues 60-70 (SESDSGSDSDS) and 77-105 (SEDDSADQDVEGEDEGGDAIENEDEDEDP). An RNA-binding region spans residues 172–230 (LEDRTLIGMLTEVFGPLQNPFYRIKLPDSKKNLFDELKVRLGEKAFIVTPDAHWIDTFE). Disordered stretches follow at residues 237–351 (TDAS…TQHH) and 472–492 (LLQQQQQQHQYQHQHQQDPRT). Acidic residues predominate over residues 243 to 259 (YDEELPEEEQEFSDDEK). Ser255 carries the post-translational modification Phosphoserine. The span at 264–278 (KKMKKQQRQRKKRDN) shows a compositional bias: basic residues. Basic and acidic residues-rich tracts occupy residues 279–289 (RKLANDSDNVK) and 324–333 (NARENIKRES). Residues 334 to 351 (SATSNRNGSSPVPITQHH) are compositionally biased toward polar residues. Over residues 472–485 (LLQQQQQQHQYQHQ) the composition is skewed to low complexity.

It belongs to the NAF1 family. During assembly of the complex, component of the small nucleolar ribonucleoprotein particles containing H/ACA-type snoRNAs (H/ACA snoRNPs) which contains CBF5, NAF1, NHP2 and NOP10 proteins. Interacts with SHQ1. Interacts directly with CBF5. Interacts with hyperphosphorylated C-terminal domain (CTD) of RNA polymerase II large subunit (RPB1).

Its subcellular location is the nucleus. Functionally, RNA-binding protein required for the maturation of box H/ACA snoRNPs complex and ribosome biogenesis. During assembly of the H/ACA snoRNPs complex, it associates with the complex and disappears during maturation of the complex and is replaced by GAR1 to yield mature H/ACA snoRNPs complex. Acts as a competitive binder for CBF5 probably required to prevent non-cognate RNAs from being loaded during transport of the particle by inducing a non-productive conformation of CBF5. This is H/ACA ribonucleoprotein complex non-core subunit NAF1 (NAF1) from Saccharomyces cerevisiae (strain ATCC 204508 / S288c) (Baker's yeast).